The sequence spans 191 residues: tRNA-specific adenosine deaminase 2 (191 aa).

Positions 20-145 (EETEKWMEQA…SVLDIASADL (126 aa)) constitute a CMP/dCMP-type deaminase domain. Zn(2+) is bound at residue H71. Residue E73 is the Proton donor of the active site. Residues C107 and C110 each contribute to the Zn(2+) site.

Belongs to the cytidine and deoxycytidylate deaminase family. ADAT2 subfamily. The cofactor is Zn(2+).

It catalyses the reaction adenosine(34) in tRNA + H2O + H(+) = inosine(34) in tRNA + NH4(+). Functionally, probably participates in deamination of adenosine-34 to inosine in many tRNAs. This chain is tRNA-specific adenosine deaminase 2 (DEADC1), found in Bos taurus (Bovine).